Consider the following 69-residue polypeptide: Protein transport protein Sec61 subunit gamma (69 aa).

Topologically, residues 1 to 40 (MDILEETAAPLKDFAKNSIRLFKKCTKPDAQEFQKIALAT) are cytoplasmic. Residues 41–61 (LIGFAIMGFIGFFVKLIHIPI) traverse the membrane as a helical segment. Residues 62–69 (NNILVGGV) are Extracellular-facing.

Belongs to the SecE/SEC61-gamma family. In terms of assembly, heterotrimeric complex composed of SEC61-alpha, SEC61-beta and SEC61-gamma.

Its subcellular location is the endoplasmic reticulum membrane. Its function is as follows. Necessary for protein translocation in the endoplasmic reticulum. This chain is Protein transport protein Sec61 subunit gamma (sec61g), found in Dictyostelium discoideum (Social amoeba).